Consider the following 163-residue polypeptide: Large ribosomal subunit protein uL10 (163 aa).

Belongs to the universal ribosomal protein uL10 family. In terms of assembly, part of the ribosomal stalk of the 50S ribosomal subunit. The N-terminus interacts with L11 and the large rRNA to form the base of the stalk. The C-terminus forms an elongated spine to which L12 dimers bind in a sequential fashion forming a multimeric L10(L12)X complex.

In terms of biological role, forms part of the ribosomal stalk, playing a central role in the interaction of the ribosome with GTP-bound translation factors. This chain is Large ribosomal subunit protein uL10 (rplJ), found in Haemophilus influenzae (strain ATCC 51907 / DSM 11121 / KW20 / Rd).